The following is a 470-amino-acid chain: MTPSTSTPHTSTAPHTSTGQSTDGAAQPGDGSSAYEAGFTESASGRVYTVTGGDWEEILGAGEQDAERIVVNMGPQHPSTHGVLRLVLEIDGETVTETRLVIGYLHTGIEKSCEYRTWTQAVTFLTRADYLSPLYNEAAYCLSVEKLLGITDDIPERATVIRVLVMELQRIASHLVWLATGGMELGATTAMIFGFREREKVLDLLELITGLRMNHAFIRPGGLAQDLPDGTERAIREFLADMPKRIREYHRLLTGQPIWKARMVDVNVLDAAGCIALGVTGPVLRAAGLPWDLRKTMPYCGYETYEFDVPTALEADSFARYLVRLEEMGESLKIIEQCLDRLRPGPVMVADKKIAWPAQLSIGADGMGNSLAHIRNIMGTSMEALIHHFKLVTEGFRVPPGQVYTQIESPRGELGYHVVSDGGTRPFRVHVRDPSFVNLQAVPALTEGGQVADVIVGVASVDPVLGGVDR.

The segment covering 1–18 has biased composition (low complexity); the sequence is MTPSTSTPHTSTAPHTST. Residues 1–37 are disordered; it reads MTPSTSTPHTSTAPHTSTGQSTDGAAQPGDGSSAYEA.

Belongs to the complex I 49 kDa subunit family. In terms of assembly, NDH-1 is composed of 14 different subunits. Subunits NuoB, C, D, E, F, and G constitute the peripheral sector of the complex.

Its subcellular location is the cell membrane. The enzyme catalyses a quinone + NADH + 5 H(+)(in) = a quinol + NAD(+) + 4 H(+)(out). Functionally, NDH-1 shuttles electrons from NADH, via FMN and iron-sulfur (Fe-S) centers, to quinones in the respiratory chain. The immediate electron acceptor for the enzyme in this species is believed to be a menaquinone. Couples the redox reaction to proton translocation (for every two electrons transferred, four hydrogen ions are translocated across the cytoplasmic membrane), and thus conserves the redox energy in a proton gradient. The protein is NADH-quinone oxidoreductase subunit D of Frankia alni (strain DSM 45986 / CECT 9034 / ACN14a).